A 213-amino-acid chain; its full sequence is Uridine kinase (213 aa).

15-22 (GASASGKS) contributes to the ATP binding site.

It belongs to the uridine kinase family.

It is found in the cytoplasm. It carries out the reaction uridine + ATP = UMP + ADP + H(+). The enzyme catalyses cytidine + ATP = CMP + ADP + H(+). It participates in pyrimidine metabolism; CTP biosynthesis via salvage pathway; CTP from cytidine: step 1/3. The protein operates within pyrimidine metabolism; UMP biosynthesis via salvage pathway; UMP from uridine: step 1/1. The polypeptide is Uridine kinase (Salmonella newport (strain SL254)).